The following is a 180-amino-acid chain: Acireductone dioxygenase (180 aa).

Residues H97, H99, E103, and H141 each coordinate Fe(2+). H97, H99, E103, and H141 together coordinate Ni(2+).

The protein belongs to the acireductone dioxygenase (ARD) family. In terms of assembly, monomer. The cofactor is Fe(2+). Mg(2+) serves as cofactor. Requires Ni(2+) as cofactor. Mn(2+) is required as a cofactor. It depends on Co(2+) as a cofactor.

It catalyses the reaction 1,2-dihydroxy-5-(methylsulfanyl)pent-1-en-3-one + O2 = 3-(methylsulfanyl)propanoate + CO + formate + 2 H(+). The catalysed reaction is 1,2-dihydroxy-5-(methylsulfanyl)pent-1-en-3-one + O2 = 4-methylsulfanyl-2-oxobutanoate + formate + 2 H(+). The protein operates within amino-acid biosynthesis; L-methionine biosynthesis via salvage pathway; L-methionine from S-methyl-5-thio-alpha-D-ribose 1-phosphate: step 5/6. Catalyzes 2 different reactions between oxygen and the acireductone 1,2-dihydroxy-3-keto-5-methylthiopentene (DHK-MTPene) depending upon the metal bound in the active site. Fe-containing acireductone dioxygenase (Fe-ARD) produces formate and 2-keto-4-methylthiobutyrate (KMTB), the alpha-ketoacid precursor of methionine in the methionine recycle pathway. Ni-containing acireductone dioxygenase (Ni-ARD) produces methylthiopropionate, carbon monoxide and formate, and does not lie on the methionine recycle pathway. The protein is Acireductone dioxygenase (mtnD) of Klebsiella oxytoca.